The primary structure comprises 603 residues: Elongation factor 4 (603 aa).

The region spanning 6–188 is the tr-type G domain; the sequence is KYVRNFSIIA…DIVKNVPAPI (183 aa). GTP is bound by residues 18–23 and 135–138; these read DHGKST and NKID.

This sequence belongs to the TRAFAC class translation factor GTPase superfamily. Classic translation factor GTPase family. LepA subfamily.

Its subcellular location is the cell membrane. The catalysed reaction is GTP + H2O = GDP + phosphate + H(+). Functionally, required for accurate and efficient protein synthesis under certain stress conditions. May act as a fidelity factor of the translation reaction, by catalyzing a one-codon backward translocation of tRNAs on improperly translocated ribosomes. Back-translocation proceeds from a post-translocation (POST) complex to a pre-translocation (PRE) complex, thus giving elongation factor G a second chance to translocate the tRNAs correctly. Binds to ribosomes in a GTP-dependent manner. This Finegoldia magna (strain ATCC 29328 / DSM 20472 / WAL 2508) (Peptostreptococcus magnus) protein is Elongation factor 4.